The following is a 958-amino-acid chain: MSDNQNKPGKPAAKPQSKYPVNMTDTPFPMRGDLAKREPQWVKQWQDQKVYEKIRKASKGRPKFILHDGPPYANGDIHLGHAVNKILKDMIVKTRQFDGFDAPYVPGWDCHGMPIEIQIEKQFGKNLPTAEVLSKARAYANEQVERQKKDFIRLGVLGQWDKPYKTMDFGNEADELRALGSLLEKGYVYRGLKPVNWCFDCGSALAEAEVEYQDKRDPAIDVGFPFAEPEKVAKAFGLAKLPTNKGYAIIWTTTPWTIPANQALNVHGDLPYALVNVVRNGVPQLLILAADLVGTVLQRCGLTGETIAICEGSALEGIRFKHPFADLDPGYNRESPIYLATYVAADSGTGIVHSAPAYGIEDFISCKSHGMRDDEIIAPVMGDGKYASWLPLFGGLTIWEASKPICAKLDEVGSLFKLVMFDHSYMHCWRHKTPIIYRATSQWFAGMDVMPKNQGATLRETALQAIEETEFFPSWGKARLHGMIANRPDWTLSRQRQWGVPMAFFVHKETGDLHPRTPELLEQIAQRVEKDGIEAWLTLDPKELLGADADMYLKNKDTLDVWFDSGCTHQTVLRGSHKEELAFPADLYLEGSDQHRGWFHSSLLTSSMMNGRAPYKALLTHGFTVDGEGKKMSKSLGNTLAPQKISDTLGADILRLWIASTDYSGELSISDEILKRVTESYRRIRNTVRFLLSNTSDFDAAKDLVPVADMLEIDRYAVAQMNAMQAEILAHYKVYEFHPVVSKLQMYCSEDLGGFYLDILKDRLYTSGVTSHARRSAQSAIWHLTHSLLRLMAPILSFTAEEAWAVFASPDVNTDGTIFTHTFYQLPEVSDGAALLAKYTLLREVRNDVTKQLEEVRVAGGIGSSLQAEVELKASGDKFAALASLDDDLKFVLITSQAGVSQVASAEEESVVVTPSTYQKCERCWHYRADVGSHAEHEGLCGRCVANLFGKGEARRFA.

The disordered stretch occupies residues 1-32 (MSDNQNKPGKPAAKPQSKYPVNMTDTPFPMRG). A 'HIGH' region motif is present at residues 71 to 81 (PYANGDIHLGH). Glu590 provides a ligand contact to L-isoleucyl-5'-AMP. The short motif at 631 to 635 (KMSKS) is the 'KMSKS' region element. Residue Lys634 coordinates ATP. The Zn(2+) site is built by Cys921, Cys924, Cys941, and Cys944.

Belongs to the class-I aminoacyl-tRNA synthetase family. IleS type 1 subfamily. In terms of assembly, monomer. Zn(2+) serves as cofactor.

Its subcellular location is the cytoplasm. It catalyses the reaction tRNA(Ile) + L-isoleucine + ATP = L-isoleucyl-tRNA(Ile) + AMP + diphosphate. Functionally, catalyzes the attachment of isoleucine to tRNA(Ile). As IleRS can inadvertently accommodate and process structurally similar amino acids such as valine, to avoid such errors it has two additional distinct tRNA(Ile)-dependent editing activities. One activity is designated as 'pretransfer' editing and involves the hydrolysis of activated Val-AMP. The other activity is designated 'posttransfer' editing and involves deacylation of mischarged Val-tRNA(Ile). The sequence is that of Isoleucine--tRNA ligase from Janthinobacterium sp. (strain Marseille) (Minibacterium massiliensis).